The sequence spans 133 residues: ATP synthase epsilon chain (133 aa).

The protein belongs to the ATPase epsilon chain family. F-type ATPases have 2 components, CF(1) - the catalytic core - and CF(0) - the membrane proton channel. CF(1) has five subunits: alpha(3), beta(3), gamma(1), delta(1), epsilon(1). CF(0) has three main subunits: a, b and c.

The protein resides in the cell membrane. Functionally, produces ATP from ADP in the presence of a proton gradient across the membrane. The protein is ATP synthase epsilon chain of Bacillus cytotoxicus (strain DSM 22905 / CIP 110041 / 391-98 / NVH 391-98).